The chain runs to 420 residues: MAP kinase-interacting serine/threonine-protein kinase 1 (420 aa).

The tract at residues 1-25 is disordered; it reads MGSSEPIPIAESDKRKKKKRKARAT. Serine 27 is subject to Phosphoserine; by PAK2. One can recognise a Protein kinase domain in the interval 37–321; the sequence is KLTSELLGEG…AAQVLQHPWV (285 aa). Residues 43 to 51 and lysine 66 each bind ATP; that span reads LGEGANAKV. Aspartate 158 acts as the Proton acceptor in catalysis. A phosphoserine mark is found at serine 168 and serine 173. Threonine 197, threonine 202, and threonine 332 each carry phosphothreonine. A disordered region spans residues 386–420; that stretch reads LSPPSKSRLARRRALAQAGRSGDAPPSPTPTTPAP. Residues 400–409 show a composition bias toward low complexity; it reads LAQAGRSGDA. The segment covering 410-420 has biased composition (pro residues); sequence PPSPTPTTPAP.

It belongs to the protein kinase superfamily. CAMK Ser/Thr protein kinase family. Interacts with the C-terminal regions of EIF4G1 and EIF4G2. Also binds to dephosphorylated ERK1 and ERK2, and to the p38 kinases. Requires Mg(2+) as cofactor. Dual phosphorylation of Thr-197 and Thr-202 activates the kinase. Phosphorylation of Thr-332 activates the kinase. MAPK3/ERK1 is one of the kinases which activate MKNK1/MNK1. Phosphorylation by PAK2 leads to a reduced phosphorylation of EIF4G1.

It carries out the reaction L-seryl-[protein] + ATP = O-phospho-L-seryl-[protein] + ADP + H(+). The enzyme catalyses L-threonyl-[protein] + ATP = O-phospho-L-threonyl-[protein] + ADP + H(+). Its activity is regulated as follows. Phosphorylated and activated by the p38 kinases and kinases in the Erk pathway. May play a role in the response to environmental stress and cytokines. Appears to regulate translation by phosphorylating EIF4E, thus increasing the affinity of this protein for the 7-methylguanosine-containing mRNA cap. In Bos taurus (Bovine), this protein is MAP kinase-interacting serine/threonine-protein kinase 1 (MKNK1).